The sequence spans 743 residues: Catalase-peroxidase (743 aa).

Residues 1-15 (MSSDSRPPQPDTSTQ) show a composition bias toward polar residues. Residues 1–40 (MSSDSRPPQPDTSTQSNSESESPAISSPTPQDHAPMTNRD) are disordered. Residues 16-28 (SNSESESPAISSP) show a composition bias toward low complexity. The tryptophyl-tyrosyl-methioninium (Trp-Tyr) (with M-259) cross-link spans 110–233 (WHAAGTYRIQ…YGATTMGLIY (124 aa)). H111 functions as the Proton acceptor in the catalytic mechanism. Positions 233–259 (YVNPEGPEGKPDPVAAAHDIRETFARM) form a cross-link, tryptophyl-tyrosyl-methioninium (Tyr-Met) (with W-110). H274 contributes to the heme b binding site. The tract at residues 490–511 (DKRGGANGGRLRLEPQKSWESN) is disordered.

The protein belongs to the peroxidase family. Peroxidase/catalase subfamily. In terms of assembly, homodimer or homotetramer. Requires heme b as cofactor. Formation of the three residue Trp-Tyr-Met cross-link is important for the catalase, but not the peroxidase activity of the enzyme.

It carries out the reaction H2O2 + AH2 = A + 2 H2O. The enzyme catalyses 2 H2O2 = O2 + 2 H2O. Functionally, bifunctional enzyme with both catalase and broad-spectrum peroxidase activity. The protein is Catalase-peroxidase of Mycobacterium ulcerans (strain Agy99).